Here is a 466-residue protein sequence, read N- to C-terminus: MKLYNTLSRTKEEFEPLNDKIVNMYVCGPTVYNYIHIGNARAFIVFDTVRRYLEYKGYKVNYVQNFTDIDDKIIKRAQEENVTTKEVAEKYIEEYFIDADNLGIKRATVHPKATEHIEDIIEFIKILIDKGYAYVVNGNVYFETAKFKDYGKLSHKNIEELQAGARIEINEEKKNPLDFVLWKAQKPGEPAWDSPWGKGRPGWHIECSVMSTKYLGKTLDIHAGGPDLVFPHHENEIAQSEAAYGQPFSKYWMHIGYLNINNEKMSKSKGNFFTVREITEKYNPEVLRLFMLMAHYRSPINFSLDLMEQAKSAYERLLNAVANLKHLLTVCKDRELNEEEKRIKEKFEEYKKEFEDAMDDDFNTADAISVLFEMSKTANTNISGNSSKKLVEYILDIFLKLSEILGLSYRGVETELNDEEILALIEERQKARKEKNWKLADEIRDRLREKGIILEDTPEGVRWKRV.

C27 serves as a coordination point for Zn(2+). The 'HIGH' region motif lies at 29–39 (PTVYNYIHIGN). C207, H232, and E236 together coordinate Zn(2+). The 'KMSKS' region signature appears at 264–268 (KMSKS). K267 serves as a coordination point for ATP.

This sequence belongs to the class-I aminoacyl-tRNA synthetase family. As to quaternary structure, monomer. Zn(2+) is required as a cofactor.

The protein localises to the cytoplasm. The enzyme catalyses tRNA(Cys) + L-cysteine + ATP = L-cysteinyl-tRNA(Cys) + AMP + diphosphate. The chain is Cysteine--tRNA ligase from Thermoanaerobacter pseudethanolicus (strain ATCC 33223 / 39E) (Clostridium thermohydrosulfuricum).